The primary structure comprises 256 residues: Coiled-coil domain-containing protein 90B, mitochondrial (256 aa).

A mitochondrion-targeting transit peptide spans 1–42; the sequence is MRNRWIWRFLRPECSGIRWISSPHGRLSPALRRGFLTTTTKS. Residues 106 to 164 adopt a coiled-coil conformation; the sequence is AQQEITIQQLMAHLDSIRKDMVILEKSEFANLRAENEKMKIELDQVKQQLINETSRIRA. The chain crosses the membrane as a helical span at residues 231 to 253; it reads TIRYLAASVFTCLAIALGFYRFW.

Belongs to the CCDC90 family. Interacts with MCU.

The protein localises to the mitochondrion membrane. The sequence is that of Coiled-coil domain-containing protein 90B, mitochondrial (Ccdc90b) from Rattus norvegicus (Rat).